Here is a 227-residue protein sequence, read N- to C-terminus: Large ribosomal subunit protein bL25 (227 aa).

This sequence belongs to the bacterial ribosomal protein bL25 family. CTC subfamily. Part of the 50S ribosomal subunit; part of the 5S rRNA/L5/L18/L25 subcomplex. Contacts the 5S rRNA. Binds to the 5S rRNA independently of L5 and L18.

In terms of biological role, this is one of the proteins that binds to the 5S RNA in the ribosome where it forms part of the central protuberance. This chain is Large ribosomal subunit protein bL25, found in Polaromonas sp. (strain JS666 / ATCC BAA-500).